A 71-amino-acid chain; its full sequence is U3-scytotoxin-Sth1h (71 aa).

Positions 1–33 are cleaved as a signal peptide; that stretch reads MSQNSITSYKMGFAKHFFLFAVLLCATAMYSVA. Residues 34–39 constitute a propeptide that is removed on maturation; that stretch reads EPAQER. 3 cysteine pairs are disulfide-bonded: C46-C60, C53-C64, and C59-C69.

In terms of tissue distribution, expressed by the venom gland.

Its subcellular location is the secreted. Its function is as follows. Probable insect neurotoxin with ion channel impairing activity. Does not show activity on 45 human receptors from 9 families (5-hydroxytryptamine, adrenergic, dopamine, muscarinic, histamine, neurotransmitter, opioid, sigma, and gaba(A) receptors). In vivo, when mixed with U3-SYTX-Sth1a does not cause paralytic or lethal activity when injected into crickets. It is noteworthy that crickets are evolutionarily distant from prey species. In Scytodes thoracica (Spitting spider), this protein is U3-scytotoxin-Sth1h.